Here is a 352-residue protein sequence, read N- to C-terminus: S-adenosylmethionine:tRNA ribosyltransferase-isomerase (352 aa).

The protein belongs to the QueA family. Monomer.

The protein localises to the cytoplasm. The enzyme catalyses 7-aminomethyl-7-carbaguanosine(34) in tRNA + S-adenosyl-L-methionine = epoxyqueuosine(34) in tRNA + adenine + L-methionine + 2 H(+). The protein operates within tRNA modification; tRNA-queuosine biosynthesis. Its function is as follows. Transfers and isomerizes the ribose moiety from AdoMet to the 7-aminomethyl group of 7-deazaguanine (preQ1-tRNA) to give epoxyqueuosine (oQ-tRNA). The sequence is that of S-adenosylmethionine:tRNA ribosyltransferase-isomerase from Syntrophomonas wolfei subsp. wolfei (strain DSM 2245B / Goettingen).